Consider the following 738-residue polypeptide: Translation initiation factor IF-2 (738 aa).

Over residues 1–10 (MNSMRISGHQ) the composition is skewed to polar residues. The tract at residues 1-150 (MNSMRISGHQ…PTTVRAPVRP (150 aa)) is disordered. Over residues 22 to 102 (AGGGRGPGNP…GGRGPSGGRG (81 aa)) the composition is skewed to gly residues. Over residues 103–120 (GDGRRREESPTDHEDGRI) the composition is skewed to basic and acidic residues. The span at 121 to 143 (NRSGRSTSTTTTRTSSTLARPTT) shows a compositional bias: low complexity. The tr-type G domain maps to 238–405 (PRPPVVTIMG…MILLVADLNE (168 aa)). The segment at 247-254 (GHVDHGKT) is G1. Residue 247–254 (GHVDHGKT) coordinates GTP. The segment at 272–276 (GITQH) is G2. The G3 stretch occupies residues 293–296 (DTPG). Residues 293-297 (DTPGH) and 347-350 (NKID) each bind GTP. The segment at 347–350 (NKID) is G4. Residues 383 to 385 (SAK) form a G5 region.

Belongs to the TRAFAC class translation factor GTPase superfamily. Classic translation factor GTPase family. IF-2 subfamily.

The protein localises to the cytoplasm. In terms of biological role, one of the essential components for the initiation of protein synthesis. Protects formylmethionyl-tRNA from spontaneous hydrolysis and promotes its binding to the 30S ribosomal subunits. Also involved in the hydrolysis of GTP during the formation of the 70S ribosomal complex. The protein is Translation initiation factor IF-2 of Roseiflexus castenholzii (strain DSM 13941 / HLO8).